Reading from the N-terminus, the 1450-residue chain is MESWPGVSLVGLLLLLLLGQGPSQIHGSSGENTSQPQQVFRTLKNFSFPCKPKKLELSVLSKSVHSLRPSDIKLVAAIGNLETPPAPGSGVVNMEKPQSLESELQNVCIGIMTALSDIIRHFNPSVLMPTCSPGKGTAGHTTIAEDLWIQAKELVRHLKDNPELDFEKDWKLITVLFSNTSQCHLCSSDQQKRHLMKHMEMLSGVLDYLHREVPRAFVNLVDLSEVLTMAQQHQETGFSPAPEICKCSEEITKLSKAVMQWSYQEAWEDLLASSKFNKHETFAVVFQSFFSEVELPLERPSPQDSTTLALRIWNSMMEPVGRKDGTLNEAERKTMKCPSQESPYLFTYRNSNYQARQLKPIGKFQMKEGTKFTCPDKDPSDSIPTTVHRLRPADIKVIGAMGDSLTAGNGAGSSPGNVLDVLTQYRGLSWSVGGDETIETVTTLANILREFNPSLKGFSVGTGKENTPRASFNQAVAGAKSDGLAAQAKKLVSLMKDDKTINFQEDWKIITVFIGGNDLCGSCNNLARFSPQTFTDNIKTALDILHAEVPRAFVNMVSVIEITPLRELFNEPKVSCPRMILRSLCPCVLNLGENSAELAQLVERNRQYQEETGKLIESGRYDTRDDFTVVLQPMFENVVMPRTLEGLPDSSFFAPDCFHFNVKTHARSAIALWKNMLEPVGRKTRHQNFEIKVPIMCPNQTSPFLSTTKNSNLGHGTSMSCEEKAPSASPPTSVHTLRPADIQVVAALGDSVTAGNGISSQEGDLADVTTQYRGLSYSAGGDKFLENVTTLPNILREFNGNLTGYSVGTGDVNSASAFLNQAVPGAKAENLASQVQTLIQKMKNDTRVNFHQDWKVITVMIGASDLCDFCKDSNRYSAANFSDHLRNALDILHKEVPRALVNLVDFMNPSIIRQVFLKNPDKCPVNQTSVLCNCVLTPGEDSHELARLEAFTKSYQSSMLQLVESGRYDTREDFSVVLQPFLFNIRLPILENGNPDTSFFAPDCILLSQKFHTQLARALWANMLEPLGKKMDTLDPKELIALACPTKDKPFLRTFRNSNYTYPIKPAIENWGSDFLCTEQSPSSKVPTSVHELRPSDIKVVAAMGDFLTTATGARPSESSSLDTPWRGLSWSIGGDGTLETHTTLPNILKKFNPSILGFSTGTLENTAGLNVAEEGARAQDMPAQAQALVKKMKSTPTINIQEDWKLITLLIGNNDLCLYCEDPENYSTREYVKYIQHALDIFYEELPRVFINVVEVMELSGLLHDQGGKCAMPLAVQKNCSCLKRSQNLMAMQELKKVNGNLQSALSELSYWHRYMQREDFAVTVQPFFRNTFVPLDERGGLDLTFFSEDCFHFSVRGHAEMAIALWNNMLEPVGKKTTSNNFTYNRTKLKCPSPENPFLYTVRNSQILLDKAKENSNTLYWAVPVAAVGGLVVGILGMMLWRTVRLVQ.

An N-terminal signal peptide occupies residues 1-27; the sequence is MESWPGVSLVGLLLLLLLGQGPSQIHG. At 28–1422 the chain is on the extracellular side; that stretch reads SSGENTSQPQ…KAKENSNTLY (1395 aa). Residues N32, N45, and N179 are each glycosylated (N-linked (GlcNAc...) asparagine). 3 tandem repeats follow at residues 41-351, 366-711, and 712-1058. The tract at residues 41–1407 is 4 X 308-326 AA approximate repeats; it reads RTLKNFSFPC…NPFLYTVRNS (1367 aa). Active-site residues include S404, D518, and H659. An N-linked (GlcNAc...) asparagine glycan is attached at N699. The segment covering 708–720 has biased composition (polar residues); that stretch reads TKNSNLGHGTSMS. Residues 708 to 734 form a disordered region; the sequence is TKNSNLGHGTSMSCEEKAPSASPPTSV. N787, N801, N844, N880, N926, N1059, N1226, N1280, N1383, and N1387 each carry an N-linked (GlcNAc...) asparagine glycan. Repeat 4 spans residues 1068–1407; it reads IENWGSDFLC…NPFLYTVRNS (340 aa). The necessary for membrane localization stretch occupies residues 1408–1450; sequence QILLDKAKENSNTLYWAVPVAAVGGLVVGILGMMLWRTVRLVQ. Residues 1423-1443 form a helical membrane-spanning segment; sequence WAVPVAAVGGLVVGILGMMLW. The Cytoplasmic portion of the chain corresponds to 1444-1450; that stretch reads RTVRLVQ.

It belongs to the 'GDSL' lipolytic enzyme family. Phospholipase B1 subfamily. Post-translationally, undergoes proteolytic cleavage in the ileum. As to expression, expressed in the ileum mucosa, Paneth cells spermatocytes, spermatids and sperm (at protein level). Expressed in the ileum, jejunum, esophagus and testis.

It is found in the apical cell membrane. The catalysed reaction is a 1,2-diacyl-sn-glycero-3-phosphocholine + H2O = a 1-acyl-sn-glycero-3-phosphocholine + a fatty acid + H(+). It carries out the reaction a 1-O-alkyl-2-acyl-sn-glycero-3-phosphocholine + H2O = a 1-O-alkyl-sn-glycero-3-phosphocholine + a fatty acid + H(+). It catalyses the reaction a 1-acyl-sn-glycero-3-phosphocholine + H2O = sn-glycerol 3-phosphocholine + a fatty acid + H(+). The enzyme catalyses a triacylglycerol + H2O = a diacylglycerol + a fatty acid + H(+). The catalysed reaction is 1,2-dihexadecanoyl-sn-glycero-3-phosphocholine + H2O = 1-hexadecanoyl-sn-glycero-3-phosphocholine + hexadecanoate + H(+). It carries out the reaction 1-hexadecanoyl-2-(9Z-octadecenoyl)-sn-glycero-3-phosphocholine + H2O = 1-hexadecanoyl-sn-glycero-3-phosphocholine + (9Z)-octadecenoate + H(+). It catalyses the reaction 1,2-di-(9Z-octadecenoyl)-sn-glycero-3-phosphocholine + H2O = 1-(9Z-octadecenoyl)-sn-glycero-3-phosphocholine + (9Z)-octadecenoate + H(+). The enzyme catalyses 1-hexadecanoyl-2-(9Z,12Z-octadecadienoyl)-sn-glycero-3-phosphocholine + H2O = (9Z,12Z)-octadecadienoate + 1-hexadecanoyl-sn-glycero-3-phosphocholine + H(+). The catalysed reaction is 1-hexadecanoyl-2-(9Z,12Z-octadecadienoyl)-sn-glycero-3-phosphocholine + H2O = 2-(9Z,12Z-octadecadienoyl)-sn-glycero-3-phosphocholine + hexadecanoate + H(+). It carries out the reaction 1-hexadecanoyl-2-(9Z-octadecenoyl)-sn-glycero-3-phosphoethanolamine + H2O = 1-hexadecanoyl-sn-glycero-3-phosphoethanolamine + (9Z)-octadecenoate + H(+). It catalyses the reaction 1-hexadecanoyl-2-(9Z-octadecenoyl)-sn-glycero-3-phospho-(1'-sn-glycerol) + H2O = 1-hexadecanoyl-sn-glycero-3-phospho-(1'-sn-glycerol) + (9Z)-octadecenoate + H(+). The enzyme catalyses 1,2-dihexadecanoyl-sn-glycero-3-phosphocholine + 2 H2O = sn-glycerol 3-phosphocholine + 2 hexadecanoate + 2 H(+). The catalysed reaction is 1-O-hexadecyl-2-(9Z)-octadecenoyl-sn-glycero-3-phosphocholine + H2O = 1-O-hexadecyl-sn-glycero-3-phosphocholine + (9Z)-octadecenoate + H(+). It carries out the reaction 1-hexadecanoyl-sn-glycero-3-phosphocholine + H2O = sn-glycerol 3-phosphocholine + hexadecanoate + H(+). It catalyses the reaction 1,2,3-tri-(9Z-octadecenoyl)-glycerol + H2O = di-(9Z)-octadecenoylglycerol + (9Z)-octadecenoate + H(+). The enzyme catalyses 1-hexadecanoyl-2-(9Z)-octadecenoyl-3-octadecanoyl-sn-glycerol + H2O = 1-hexadecanoyl-2-(9Z-octadecenoyl)-sn-glycerol + octadecanoate + H(+). The catalysed reaction is 1,3-dihexadecanoyl-2-(9Z-octadecenoyl)glycerol + H2O = 1,3-dihexadecanoylglycerol + (9Z)-octadecenoate + H(+). It carries out the reaction 1,3-dihexadecanoyl-2-(9Z-octadecenoyl)glycerol + H2O = 1-hexadecanoyl-2-(9Z-octadecenoyl)-glycerol + hexadecanoate + H(+). It catalyses the reaction 1-hexadecanoyl-2-(9Z)-octadecenoyl-3-octadecanoyl-sn-glycerol + H2O = 1-hexadecanoyl-3-octadecanoyl-sn-glycerol + (9Z)-octadecenoate + H(+). The enzyme catalyses 1-hexadecanoyl-2-(9Z)-octadecenoyl-3-octadecanoyl-sn-glycerol + H2O = 2-(9Z-octadecenoyl)-3-octadecanoyl-sn-glycerol + hexadecanoate + H(+). The catalysed reaction is 1-octadecanoyl-2-(9Z,12Z)-octadecadienoyl-sn-glycerol + H2O = 1-octadecanoyl-sn-glycerol + (9Z,12Z)-octadecadienoate + H(+). It carries out the reaction 1,2-di-(9Z-octadecenoyl)-sn-glycerol + H2O = 1-(9Z-octadecenoyl)-sn-glycerol + (9Z)-octadecenoate + H(+). It catalyses the reaction 2,3-di-(9Z)-octadecenoyl-sn-glycerol + H2O = 3-(9Z-octadecenoyl)-sn-glycerol + (9Z)-octadecenoate + H(+). The enzyme catalyses 1,3-di-(9Z-octadecenoyl)-glycerol + H2O = 1-(9Z-octadecenoyl)-glycerol + (9Z)-octadecenoate + H(+). The catalysed reaction is 1-(9Z-octadecenoyl)-glycerol + H2O = glycerol + (9Z)-octadecenoate + H(+). It carries out the reaction 2-(9Z-octadecenoyl)-glycerol + H2O = glycerol + (9Z)-octadecenoate + H(+). With respect to regulation, up-regulated by bile acids such as deoxycholate. Inhibited by diisopropyl fluorophosphate. In terms of biological role, calcium-independent membrane-associated phospholipase that catalyzes complete diacylation of phospholipids by hydrolyzing both sn-1 and sn-2 fatty acyl chains attached to the glycerol backbone (phospholipase B activity). Has dual phospholipase and lysophospholipase activities toward diacylphospholipids. Preferentially cleaves sn-2 ester bonds over sn-1 bonds. Acts as a lipase toward glycerolipid substrates. Hydrolyzes fatty acyl chains of diacylglycerols with preference for the sn-2 position and of triacylglycerols with not positional selectivity. May also hydrolyze long chain retinyl esters such as retinyl palmitate. May contribute to digestion of dietary phospholipids, glycerolipids and retinoids, facilitating lipid absorption at the brush border. The sequence is that of Phospholipase B1, membrane-associated (Plb1) from Rattus norvegicus (Rat).